The chain runs to 370 residues: L-lactate oxidase (370 aa).

Residues 8–367 (DPDGMPVTLS…TPDLLTGFSG (360 aa)) enclose the FMN hydroxy acid dehydrogenase domain. Residue Tyr34 coordinates pyruvate. Residues 87 to 89 (PMA), Ser116, and Gln136 each bind FMN. Tyr138 contacts pyruvate. Thr164 contacts FMN. Arg173 lines the pyruvate pocket. Lys238 and Ser260 together coordinate FMN. The pyruvate site is built by His262 and Arg265. His262 (proton acceptor) is an active-site residue. FMN is bound by residues 293–297 (DGGIR) and Arg317.

The protein belongs to the FMN-dependent alpha-hydroxy acid dehydrogenase family. In terms of assembly, homotetramer. FMN is required as a cofactor.

It catalyses the reaction (S)-lactate + O2 = pyruvate + H2O2. The catalysed reaction is a (2S)-2-hydroxycarboxylate + O2 = a 2-oxocarboxylate + H2O2. It carries out the reaction glycolate + O2 = glyoxylate + H2O2. The enzyme catalyses 2-hydroxyoctadecanoate + O2 = 2-oxooctadecanoate + H2O2. In terms of biological role, catalyzes the oxidation of (S)-lactate (L-lactate) to pyruvate, with a reduction of O2 to H2O2. Is also able to use glycolate and to a lesser extent 2-hydroxyoctadecanoate as substrate. In Roseobacter sp. (strain GAI101), this protein is L-lactate oxidase.